A 955-amino-acid chain; its full sequence is Disintegrin and metalloproteinase domain-containing protein 19 (955 aa).

The N-terminal stretch at 1–25 (MPGGAGAARLCLLAFALQPLRPRAA) is a signal peptide. Residues 26–202 (REPGWTRGSE…QTKKRPRRMK (177 aa)) constitute a propeptide that is removed on maturation. The Cysteine switch motif lies at 130 to 137 (STCRGIRG). Residue cysteine 132 participates in Zn(2+) binding. Asparagine 144 carries N-linked (GlcNAc...) asparagine glycosylation. Topologically, residues 203–699 (REDLNSMKYV…IDSGPMPPES (497 aa)) are extracellular. The Peptidase M12B domain maps to 210–408 (KYVELYLVAD…GGGMCLSNMP (199 aa)). Intrachain disulfides connect cysteine 320-cysteine 403, cysteine 360-cysteine 387, and cysteine 361-cysteine 370. Histidine 345 provides a ligand contact to Zn(2+). Residue glutamate 346 is part of the active site. The Zn(2+) site is built by histidine 349 and histidine 355. A Disintegrin domain is found at 416–502 (GRRCGNGYLE…HCPTNFYQMD (87 aa)). N-linked (GlcNAc...) asparagine glycosylation is found at asparagine 444 and asparagine 447. Cysteine 474 and cysteine 494 form a disulfide bridge. Asparagine 645 is a glycosylation site (N-linked (GlcNAc...) asparagine). The region spanning 650 to 682 (ETEGCGKKCNGHGVCNNNQNCHCLPGWAPPFCN) is the EGF-like domain. Disulfide bonds link cysteine 654/cysteine 664, cysteine 658/cysteine 670, and cysteine 672/cysteine 681. Residues 700-720 (VGPVVAGVLVAILVLAVLMLM) form a helical membrane-spanning segment. The Cytoplasmic segment spans residues 721–955 (YYCCRQNNKL…AKHSCFLVPA (235 aa)). A compositionally biased stretch (polar residues) spans 753–771 (SQNSGTGHANPTFKLQTPQ). A disordered region spans residues 753 to 917 (SQNSGTGHAN…LKVKAGTRGL (165 aa)). Composition is skewed to pro residues over residues 787–796 (SQPPPRPPPD) and 833–844 (RPPPSRPIPPAP). The short motif at 833–844 (RPPPSRPIPPAP) is the SH3-binding element.

Interacts with SH3PXD2A. Zn(2+) is required as a cofactor. Post-translationally, the precursor is cleaved by a furin endopeptidase. In terms of tissue distribution, expressed in many normal organ tissues and several cancer cell lines.

The protein resides in the membrane. Its function is as follows. Participates in the proteolytic processing of beta-type neuregulin isoforms which are involved in neurogenesis and synaptogenesis, suggesting a regulatory role in glial cell. Also cleaves alpha-2 macroglobulin. May be involved in osteoblast differentiation and/or osteoblast activity in bone. The polypeptide is Disintegrin and metalloproteinase domain-containing protein 19 (ADAM19) (Homo sapiens (Human)).